Reading from the N-terminus, the 161-residue chain is 3-isopropylmalate dehydratase small subunit (161 aa).

It belongs to the LeuD family. LeuD type 2 subfamily. In terms of assembly, heterodimer of LeuC and LeuD.

The enzyme catalyses (2R,3S)-3-isopropylmalate = (2S)-2-isopropylmalate. It functions in the pathway amino-acid biosynthesis; L-leucine biosynthesis; L-leucine from 3-methyl-2-oxobutanoate: step 2/4. In terms of biological role, catalyzes the isomerization between 2-isopropylmalate and 3-isopropylmalate, via the formation of 2-isopropylmaleate. The protein is 3-isopropylmalate dehydratase small subunit of Clostridium beijerinckii (strain ATCC 51743 / NCIMB 8052) (Clostridium acetobutylicum).